The primary structure comprises 487 residues: Glutamate--tRNA ligase 2 (487 aa).

Positions 31–41 (PSPTGHLHVGG) match the 'HIGH' region motif. A 'KMSKS' region motif is present at residues 254-258 (PLSKR). Lys-257 is a binding site for ATP.

The protein belongs to the class-I aminoacyl-tRNA synthetase family. Glutamate--tRNA ligase type 1 subfamily. Monomer.

Its subcellular location is the cytoplasm. It catalyses the reaction tRNA(Glu) + L-glutamate + ATP = L-glutamyl-tRNA(Glu) + AMP + diphosphate. Functionally, catalyzes the attachment of glutamate to tRNA(Glu) in a two-step reaction: glutamate is first activated by ATP to form Glu-AMP and then transferred to the acceptor end of tRNA(Glu). The protein is Glutamate--tRNA ligase 2 of Thermotoga maritima (strain ATCC 43589 / DSM 3109 / JCM 10099 / NBRC 100826 / MSB8).